The following is a 188-amino-acid chain: Elongation factor P (188 aa).

Lys-34 carries the post-translational modification N6-(3,6-diaminohexanoyl)-5-hydroxylysine.

This sequence belongs to the elongation factor P family. May be beta-lysylated on the epsilon-amino group of Lys-34 by the combined action of EpmA and EpmB, and then hydroxylated on the C5 position of the same residue by EpmC (if this protein is present). Lysylation is critical for the stimulatory effect of EF-P on peptide-bond formation. The lysylation moiety may extend toward the peptidyltransferase center and stabilize the terminal 3-CCA end of the tRNA. Hydroxylation of the C5 position on Lys-34 may allow additional potential stabilizing hydrogen-bond interactions with the P-tRNA.

The protein localises to the cytoplasm. It functions in the pathway protein biosynthesis; polypeptide chain elongation. In terms of biological role, involved in peptide bond synthesis. Alleviates ribosome stalling that occurs when 3 or more consecutive Pro residues or the sequence PPG is present in a protein, possibly by augmenting the peptidyl transferase activity of the ribosome. Modification of Lys-34 is required for alleviation. This chain is Elongation factor P, found in Haemophilus influenzae (strain 86-028NP).